Reading from the N-terminus, the 424-residue chain is Splicing factor 3B subunit 4 (424 aa).

An N-acetylalanine modification is found at alanine 2. 2 consecutive RRM domains span residues alanine 13–alanine 91 and alanine 100–lysine 179. Tyrosine 56 is subject to Phosphotyrosine. The interval proline 207 to glutamine 424 is disordered. Positions asparagine 222 to glycine 231 are enriched in low complexity. Residues leucine 232–proline 268 are compositionally biased toward pro residues. 2 stretches are compositionally biased toward low complexity: residues glycine 269–threonine 280 and histidine 303–histidine 323. Composition is skewed to pro residues over residues glutamine 332–proline 381 and proline 388–glutamine 424.

This sequence belongs to the SF3B4 family. Component of the 17S U2 SnRNP complex, a ribonucleoprotein complex that contains small nuclear RNA (snRNA) U2 and a number of specific proteins. Part of the SF3B subcomplex of the 17S U2 SnRNP complex. SF3B associates with the splicing subcomplex SF3A and a 12S RNA unit to form the U2 small nuclear ribonucleoproteins complex (U2 snRNP). SF3B4 has been found in complex spliceosome 'B' and 'C' as well. Component of the minor (U12-type spliceosome) spliceosome. Found in a complex with PRMT9, SF3B2 and SF3B4.

It localises to the nucleus. Its function is as follows. Component of the 17S U2 SnRNP complex of the spliceosome, a large ribonucleoprotein complex that removes introns from transcribed pre-mRNAs. The 17S U2 SnRNP complex (1) directly participates in early spliceosome assembly and (2) mediates recognition of the intron branch site during pre-mRNA splicing by promoting the selection of the pre-mRNA branch-site adenosine, the nucleophile for the first step of splicing. Within the 17S U2 SnRNP complex, SF3B4 is part of the SF3B subcomplex, which is required for 'A' complex assembly formed by the stable binding of U2 snRNP to the branchpoint sequence in pre-mRNA. Sequence independent binding of SF3A and SF3B subcomplexes upstream of the branch site is essential, it may anchor U2 snRNP to the pre-mRNA. May also be involved in the assembly of the 'E' complex. Also acts as a component of the minor spliceosome, which is involved in the splicing of U12-type introns in pre-mRNAs. The sequence is that of Splicing factor 3B subunit 4 (SF3B4) from Homo sapiens (Human).